A 28-amino-acid chain; its full sequence is C-hordein (28 aa).

The disordered stretch occupies residues 1–28 (RQLNPSSQELQSPQQSYLQQPYPQNPYL).

In terms of tissue distribution, developing endosperm.

Its function is as follows. Sulfur-poor seed storage protein. This is C-hordein from Hordeum vulgare subsp. spontaneum (Wild barley).